Reading from the N-terminus, the 150-residue chain is Endoribonuclease YbeY (150 aa).

The Zn(2+) site is built by His102, His106, and His112.

The protein belongs to the endoribonuclease YbeY family. Requires Zn(2+) as cofactor.

The protein localises to the cytoplasm. In terms of biological role, single strand-specific metallo-endoribonuclease involved in late-stage 70S ribosome quality control and in maturation of the 3' terminus of the 16S rRNA. This chain is Endoribonuclease YbeY, found in Thermotoga petrophila (strain ATCC BAA-488 / DSM 13995 / JCM 10881 / RKU-1).